We begin with the raw amino-acid sequence, 243 residues long: Ubiquinone biosynthesis O-methyltransferase (243 aa).

Arg-44, Gly-64, Asp-85, and Met-129 together coordinate S-adenosyl-L-methionine.

It belongs to the methyltransferase superfamily. UbiG/COQ3 family.

It catalyses the reaction a 3-demethylubiquinol + S-adenosyl-L-methionine = a ubiquinol + S-adenosyl-L-homocysteine + H(+). The catalysed reaction is a 3-(all-trans-polyprenyl)benzene-1,2-diol + S-adenosyl-L-methionine = a 2-methoxy-6-(all-trans-polyprenyl)phenol + S-adenosyl-L-homocysteine + H(+). Its pathway is cofactor biosynthesis; ubiquinone biosynthesis. Its function is as follows. O-methyltransferase that catalyzes the 2 O-methylation steps in the ubiquinone biosynthetic pathway. This is Ubiquinone biosynthesis O-methyltransferase from Erwinia tasmaniensis (strain DSM 17950 / CFBP 7177 / CIP 109463 / NCPPB 4357 / Et1/99).